The chain runs to 81 residues: Defensin-like protein 144 (81 aa).

An N-terminal signal peptide occupies residues 1–24 (MKNSFRFSFTVITTFIICVLVSGA). Cystine bridges form between Cys30–Cys74, Cys42–Cys61, Cys47–Cys69, and Cys51–Cys71.

It belongs to the DEFL family.

The protein localises to the secreted. In Arabidopsis thaliana (Mouse-ear cress), this protein is Defensin-like protein 144 (LCR10).